A 239-amino-acid polypeptide reads, in one-letter code: Ribonuclease PH (239 aa).

Phosphate-binding positions include Arg87 and 125 to 127 (GTR).

Belongs to the RNase PH family. In terms of assembly, homohexameric ring arranged as a trimer of dimers.

The enzyme catalyses tRNA(n+1) + phosphate = tRNA(n) + a ribonucleoside 5'-diphosphate. In terms of biological role, phosphorolytic 3'-5' exoribonuclease that plays an important role in tRNA 3'-end maturation. Removes nucleotide residues following the 3'-CCA terminus of tRNAs; can also add nucleotides to the ends of RNA molecules by using nucleoside diphosphates as substrates, but this may not be physiologically important. Probably plays a role in initiation of 16S rRNA degradation (leading to ribosome degradation) during starvation. The protein is Ribonuclease PH of Saccharophagus degradans (strain 2-40 / ATCC 43961 / DSM 17024).